We begin with the raw amino-acid sequence, 740 residues long: Catalase-peroxidase (740 aa).

Positions 107-229 form a cross-link, tryptophyl-tyrosyl-methioninium (Trp-Tyr) (with M-255); the sequence is WHAAGTYRIH…LAAVQMGLIY (123 aa). Residue histidine 108 is the Proton acceptor of the active site. Positions 229 to 255 form a cross-link, tryptophyl-tyrosyl-methioninium (Tyr-Met) (with W-107); it reads YVNPEGPNGNPDPMAAAVDIRETFRRM. Histidine 270 serves as a coordination point for heme b. Tryptophan 321 serves as the catalytic Tryptophan radical intermediate.

Belongs to the peroxidase family. Peroxidase/catalase subfamily. As to quaternary structure, homodimer. Requires heme b as cofactor. In terms of processing, formation of the three residue Trp-Tyr-Met cross-link is important for the catalase, but not the peroxidase activity of the enzyme.

The catalysed reaction is H2O2 + AH2 = A + 2 H2O. The enzyme catalyses 2 H2O2 = O2 + 2 H2O. In terms of biological role, bifunctional enzyme with both catalase and broad-spectrum peroxidase activity, oxidizing various electron donors including NADP(H). Protects M.tuberculosis against toxic reactive oxygen species (ROS) including hydrogen peroxide as well as organic peroxides and thus contributes to its survival within host macrophages by countering the phagocyte oxidative burst. Also displays efficient peroxynitritase activity, which may help the bacterium to persist in macrophages. Catalyzes the oxidative activation of the antitubercular pro-drug isoniazid (INH) to generate an isonicotinoyl radical that then reacts nonenzymatically with NAD to form an isonicotinoyl-NAD adduct which inhibits InhA. The chain is Catalase-peroxidase from Mycobacterium tuberculosis (strain CDC 1551 / Oshkosh).